The chain runs to 347 residues: GMP reductase (347 aa).

Residue 108-131 (ADFEKTQQILSQNPQLNFVCIDVA) participates in NADP(+) binding. K(+) contacts are provided by Gly-181 and Gly-183. Cys-186 (thioimidate intermediate) is an active-site residue. NADP(+) is bound at residue 216–239 (IISDGGCTMPGDVAKAFGGGADFV).

It belongs to the IMPDH/GMPR family. GuaC type 1 subfamily. As to quaternary structure, homotetramer.

The enzyme catalyses IMP + NH4(+) + NADP(+) = GMP + NADPH + 2 H(+). Its function is as follows. Catalyzes the irreversible NADPH-dependent deamination of GMP to IMP. It functions in the conversion of nucleobase, nucleoside and nucleotide derivatives of G to A nucleotides, and in maintaining the intracellular balance of A and G nucleotides. The protein is GMP reductase of Klebsiella pneumoniae subsp. pneumoniae (strain ATCC 700721 / MGH 78578).